The sequence spans 468 residues: 3-isopropylmalate dehydratase large subunit (468 aa).

[4Fe-4S] cluster contacts are provided by C346, C406, and C409.

Belongs to the aconitase/IPM isomerase family. LeuC type 1 subfamily. In terms of assembly, heterodimer of LeuC and LeuD. It depends on [4Fe-4S] cluster as a cofactor.

It carries out the reaction (2R,3S)-3-isopropylmalate = (2S)-2-isopropylmalate. It participates in amino-acid biosynthesis; L-leucine biosynthesis; L-leucine from 3-methyl-2-oxobutanoate: step 2/4. Functionally, catalyzes the isomerization between 2-isopropylmalate and 3-isopropylmalate, via the formation of 2-isopropylmaleate. The polypeptide is 3-isopropylmalate dehydratase large subunit (Pseudoalteromonas atlantica (strain T6c / ATCC BAA-1087)).